The primary structure comprises 118 residues: Small ribosomal subunit protein uS13 (118 aa).

Positions 94 to 118 (GLPVRGQRTKTNARTRKGPRKPIKK) are disordered.

It belongs to the universal ribosomal protein uS13 family. As to quaternary structure, part of the 30S ribosomal subunit. Forms a loose heterodimer with protein S19. Forms two bridges to the 50S subunit in the 70S ribosome.

Functionally, located at the top of the head of the 30S subunit, it contacts several helices of the 16S rRNA. In the 70S ribosome it contacts the 23S rRNA (bridge B1a) and protein L5 of the 50S subunit (bridge B1b), connecting the 2 subunits; these bridges are implicated in subunit movement. Contacts the tRNAs in the A and P-sites. In Pasteurella multocida (strain Pm70), this protein is Small ribosomal subunit protein uS13.